The primary structure comprises 387 residues: Phosphoglycerate kinase (387 aa).

Residues 21–23 (DLN), Arg-36, 59–62 (HLGR), Arg-113, and Arg-146 contribute to the substrate site. ATP contacts are provided by residues Lys-197, Glu-314, and 340–343 (GGDT).

It belongs to the phosphoglycerate kinase family. In terms of assembly, monomer.

It is found in the cytoplasm. It carries out the reaction (2R)-3-phosphoglycerate + ATP = (2R)-3-phospho-glyceroyl phosphate + ADP. Its pathway is carbohydrate degradation; glycolysis; pyruvate from D-glyceraldehyde 3-phosphate: step 2/5. In Pseudomonas aeruginosa (strain ATCC 15692 / DSM 22644 / CIP 104116 / JCM 14847 / LMG 12228 / 1C / PRS 101 / PAO1), this protein is Phosphoglycerate kinase.